The primary structure comprises 60 residues: U-scutigerotoxin(02)-Tl4a (60 aa).

The protein belongs to the scutigerotoxin-02 family. In terms of processing, contains 3 disulfide bonds. Expressed by the venom gland.

The protein resides in the secreted. In Thereuopoda longicornis (Long-legged centipede), this protein is U-scutigerotoxin(02)-Tl4a.